Consider the following 723-residue polypeptide: Translation initiation factor IF-2 (723 aa).

The disordered stretch occupies residues 112–138; it reads KIFNNKKNKKQKPQQAPQQEVQKKKEK. Basic residues predominate over residues 114 to 123; that stretch reads FNNKKNKKQK. Residues 224–393 enclose the tr-type G domain; sequence ERPPVVTIMG…LLVSEMEELK (170 aa). The tract at residues 233 to 240 is G1; the sequence is GHVDHGKT. 233–240 is a binding site for GTP; that stretch reads GHVDHGKT. A G2 region spans residues 258–262; the sequence is GITQH. Positions 279–282 are G3; sequence DTPG. Residues 279–283 and 333–336 contribute to the GTP site; these read DTPGH and NKID. Positions 333–336 are G4; it reads NKID. The interval 369–371 is G5; the sequence is SAL.

Belongs to the TRAFAC class translation factor GTPase superfamily. Classic translation factor GTPase family. IF-2 subfamily.

The protein localises to the cytoplasm. Functionally, one of the essential components for the initiation of protein synthesis. Protects formylmethionyl-tRNA from spontaneous hydrolysis and promotes its binding to the 30S ribosomal subunits. Also involved in the hydrolysis of GTP during the formation of the 70S ribosomal complex. This Anoxybacillus flavithermus (strain DSM 21510 / WK1) protein is Translation initiation factor IF-2.